Reading from the N-terminus, the 187-residue chain is Elongation factor P (187 aa).

The protein belongs to the elongation factor P family.

Its subcellular location is the cytoplasm. It participates in protein biosynthesis; polypeptide chain elongation. Its function is as follows. Involved in peptide bond synthesis. Stimulates efficient translation and peptide-bond synthesis on native or reconstituted 70S ribosomes in vitro. Probably functions indirectly by altering the affinity of the ribosome for aminoacyl-tRNA, thus increasing their reactivity as acceptors for peptidyl transferase. The sequence is that of Elongation factor P from Wolinella succinogenes (strain ATCC 29543 / DSM 1740 / CCUG 13145 / JCM 31913 / LMG 7466 / NCTC 11488 / FDC 602W) (Vibrio succinogenes).